An 80-amino-acid polypeptide reads, in one-letter code: Probable small nuclear ribonucleoprotein G (80 aa).

In terms of domain architecture, Sm spans 5 to 76; the sequence is GQPPDLKKYM…IVTVEALEPV (72 aa).

It belongs to the snRNP Sm proteins family.

It is found in the nucleus. Probable common Sm protein, is found in U1 and U2 snRNPs and may be part of the spliceosome. The sequence is that of Probable small nuclear ribonucleoprotein G from Arabidopsis thaliana (Mouse-ear cress).